A 613-amino-acid polypeptide reads, in one-letter code: MHATTQPFRPIQPLSDQLISQIAAGEVVERPSAVVKELLENALDAGATAITVRLEQGGVKRIAITDNGRGITPEQLPLALARHATSKINSLNELENVGTLGFRGEALASIASVAQLTLTSRTADAQHAWEISGVQGSDQKNTVAPSSGAPGTTVDVQDLYFNTPARRKFLKTEQTEFGHCAEVVRRIALSRPDVAFSLSHNGKTVDHWAVNDIAKRSAHILGSEFSGARLPLEETAGPLHLHGFIGLPTASKARGDAQYFYVNGRFVRDKLLMHAVRSAYQDVLHGDRYPSYVISLDLDPALVDVNVHPSKIEVRFRDSRSVHQFVFHAVSRALAQTSATAFGAVPSPTPAPSGALPWLREQQQTTFAPQFQQQYGVAQTTANYGALFNTDGAVTPLGTEPAPAFAAFTNSPAQTMSDDEFPLGFALAQLHGIFILAQNTKGLVLVDMHAAHERILYEQLKNALDDNAMQVQPLLIPITFYADDVEVGTAEDSKETLLSLGFDIAVMSPTTLAIRAVPTLLKNADAQSLARDVLRDVREYGGSRVLVERRNELLGTLACHTAVRANRMLTGPEMNALLRQMEATERADQCNHGRPTWVQLGLSDLDKLFERGR.

Belongs to the DNA mismatch repair MutL/HexB family.

Its function is as follows. This protein is involved in the repair of mismatches in DNA. It is required for dam-dependent methyl-directed DNA mismatch repair. May act as a 'molecular matchmaker', a protein that promotes the formation of a stable complex between two or more DNA-binding proteins in an ATP-dependent manner without itself being part of a final effector complex. In Janthinobacterium sp. (strain Marseille) (Minibacterium massiliensis), this protein is DNA mismatch repair protein MutL.